The sequence spans 594 residues: Aspartate--tRNA(Asp/Asn) ligase (594 aa).

Position 175 (E175) interacts with L-aspartate. The segment at 199–202 is aspartate; sequence QIYK. Positions 221 and 454 each coordinate L-aspartate. Position 221 to 223 (221 to 223) interacts with ATP; sequence RDE. An ATP-binding site is contributed by E488. R495 contacts L-aspartate. 540–543 is a binding site for ATP; that stretch reads GIDR.

The protein belongs to the class-II aminoacyl-tRNA synthetase family. Type 1 subfamily. Homodimer.

The protein resides in the cytoplasm. The catalysed reaction is tRNA(Asx) + L-aspartate + ATP = L-aspartyl-tRNA(Asx) + AMP + diphosphate. Aspartyl-tRNA synthetase with relaxed tRNA specificity since it is able to aspartylate not only its cognate tRNA(Asp) but also tRNA(Asn). Reaction proceeds in two steps: L-aspartate is first activated by ATP to form Asp-AMP and then transferred to the acceptor end of tRNA(Asp/Asn). This chain is Aspartate--tRNA(Asp/Asn) ligase, found in Chelativorans sp. (strain BNC1).